The chain runs to 564 residues: Alpha-amylase 3 (564 aa).

A signal peptide spans M1–A21. A disulfide bridge links C51 with C59. Substrate-binding residues include N56 and W105. Residue N143 coordinates Ca(2+). Cysteines 172 and 188 form a disulfide. N-linked (GlcNAc...) asparagine glycosylation is present at N181. Position 198 (D198) interacts with Ca(2+). R227 is a substrate binding site. Position 229 (D229) interacts with Ca(2+). Catalysis depends on D229, which acts as the Nucleophile. Residue K232–M233 coordinates substrate. N235 carries an N-linked (GlcNAc...) asparagine glycan. A Ca(2+)-binding site is contributed by E253. The Proton donor role is filled by E253. Cysteines 263 and 306 form a disulfide. N-linked (GlcNAc...) asparagine glycans are attached at residues N282 and N305. Positions 322 and 369 each coordinate substrate. N-linked (GlcNAc...) asparagine glycans are attached at residues N438, N447, and N498. S538 carries the GPI-anchor amidated serine lipid modification. Residues S539 to F564 constitute a propeptide, removed in mature form.

It belongs to the glycosyl hydrolase 13 family. It depends on Ca(2+) as a cofactor. In terms of processing, N-glycosylated.

It is found in the cell membrane. The catalysed reaction is Endohydrolysis of (1-&gt;4)-alpha-D-glucosidic linkages in polysaccharides containing three or more (1-&gt;4)-alpha-linked D-glucose units.. Has a role in cell wall biosynthesis where it is involved in maintaining cell wall strength and shape. This chain is Alpha-amylase 3 (aah3), found in Schizosaccharomyces pombe (strain 972 / ATCC 24843) (Fission yeast).